We begin with the raw amino-acid sequence, 418 residues long: Tyrosine--tRNA ligase (418 aa).

Y34 lines the L-tyrosine pocket. The short motif at 39-48 (PTADSLHLGH) is the 'HIGH' region element. The L-tyrosine site is built by Y169 and Q173. Positions 229–233 (KFGKS) match the 'KMSKS' region motif. K232 serves as a coordination point for ATP. The region spanning 352–418 (LNLVDMLVTA…GKKKYAVLTY (67 aa)) is the S4 RNA-binding domain.

It belongs to the class-I aminoacyl-tRNA synthetase family. TyrS type 1 subfamily. In terms of assembly, homodimer.

It localises to the cytoplasm. It catalyses the reaction tRNA(Tyr) + L-tyrosine + ATP = L-tyrosyl-tRNA(Tyr) + AMP + diphosphate + H(+). Functionally, catalyzes the attachment of tyrosine to tRNA(Tyr) in a two-step reaction: tyrosine is first activated by ATP to form Tyr-AMP and then transferred to the acceptor end of tRNA(Tyr). The protein is Tyrosine--tRNA ligase of Streptococcus pyogenes serotype M28 (strain MGAS6180).